Here is a 491-residue protein sequence, read N- to C-terminus: 2-aminomuconic 6-semialdehyde dehydrogenase (491 aa).

Catalysis depends on residues Glu-252 and Cys-286.

Belongs to the aldehyde dehydrogenase family. Homotrimer.

The enzyme catalyses 2-aminomuconate 6-semialdehyde + NAD(+) + H2O = (2Z,4E)-2-aminomuconate + NADH + 2 H(+). With respect to regulation, strongly inhibited by Ag(+) and Hg(+), and comnpletely inhibited by p-chloromercuribenzoic acid. In terms of biological role, involved in the modified meta-cleavage pathway for 2-aminophenol catabolism. The enzyme is also active toward 2-hydroxymuconic 6-semialdehyde, acetaldehyde, propionaldehyde, and butyraldehyde. The polypeptide is 2-aminomuconic 6-semialdehyde dehydrogenase (amnC) (Pseudomonas sp).